We begin with the raw amino-acid sequence, 423 residues long: Dihydroorotase (423 aa).

Residues His60 and His62 each contribute to the Zn(2+) site. Substrate contacts are provided by residues 62-64 (HFR) and Asn94. Zn(2+) is bound by residues Asp152, His179, His232, and Asp305. The active site involves Asp305. Residues His309 and 323-324 (PG) each bind substrate.

This sequence belongs to the metallo-dependent hydrolases superfamily. DHOase family. Class I DHOase subfamily. Requires Zn(2+) as cofactor.

The enzyme catalyses (S)-dihydroorotate + H2O = N-carbamoyl-L-aspartate + H(+). It participates in pyrimidine metabolism; UMP biosynthesis via de novo pathway; (S)-dihydroorotate from bicarbonate: step 3/3. Functionally, catalyzes the reversible cyclization of carbamoyl aspartate to dihydroorotate. This is Dihydroorotase from Sulfurihydrogenibium sp. (strain YO3AOP1).